The sequence spans 367 residues: Leucine-rich repeat-containing protein 28 (367 aa).

LRR repeat units lie at residues 16–36 (KHKN…ELLK), 42–63 (HLER…LAQK), 66–87 (NLVE…IGSL), 89–111 (KLQC…GGLR), 112–133 (ALRH…VGDL), 135–156 (ELQT…LHLC), 158–180 (SLQY…CQLP), 181–202 (SLNE…LGRS), and 204–226 (ELQY…LYNK).

In Mus musculus (Mouse), this protein is Leucine-rich repeat-containing protein 28 (Lrrc28).